The following is an 83-amino-acid chain: Small ribosomal subunit protein eS21 (83 aa).

Belongs to the eukaryotic ribosomal protein eS21 family. As to quaternary structure, component of the 40S small ribosomal subunit.

Its subcellular location is the cytoplasm. It localises to the cytosol. The protein localises to the rough endoplasmic reticulum. This Spodoptera frugiperda (Fall armyworm) protein is Small ribosomal subunit protein eS21 (RpS21).